Here is a 147-residue protein sequence, read N- to C-terminus: Large ribosomal subunit protein uL15 (147 aa).

Over residues 1 to 14 (MKLHELRPAEGAVR) the composition is skewed to basic and acidic residues. The interval 1-54 (MKLHELRPAEGAVRDRKRKGRGTASGLGKTAGRGSNGQKARSGGGVRPGFEGGQ) is disordered. 2 stretches are compositionally biased toward gly residues: residues 23 to 35 (TASG…GRGS) and 42 to 52 (SGGGVRPGFEG).

This sequence belongs to the universal ribosomal protein uL15 family. As to quaternary structure, part of the 50S ribosomal subunit.

Its function is as follows. Binds to the 23S rRNA. The protein is Large ribosomal subunit protein uL15 of Alkaliphilus oremlandii (strain OhILAs) (Clostridium oremlandii (strain OhILAs)).